The chain runs to 325 residues: Elongation factor P--(R)-beta-lysine ligase (325 aa).

Ser-76–Glu-78 serves as a coordination point for substrate. ATP contacts are provided by residues Arg-100–Glu-102 and Asn-109. Tyr-118 lines the substrate pocket. An ATP-binding site is contributed by Glu-244 to Leu-245. Glu-251 contributes to the substrate binding site. Gly-300 is an ATP binding site.

It belongs to the class-II aminoacyl-tRNA synthetase family. EpmA subfamily. Homodimer.

It catalyses the reaction D-beta-lysine + L-lysyl-[protein] + ATP = N(6)-((3R)-3,6-diaminohexanoyl)-L-lysyl-[protein] + AMP + diphosphate + H(+). With EpmB is involved in the beta-lysylation step of the post-translational modification of translation elongation factor P (EF-P). Catalyzes the ATP-dependent activation of (R)-beta-lysine produced by EpmB, forming a lysyl-adenylate, from which the beta-lysyl moiety is then transferred to the epsilon-amino group of a conserved specific lysine residue in EF-P. The sequence is that of Elongation factor P--(R)-beta-lysine ligase from Citrobacter koseri (strain ATCC BAA-895 / CDC 4225-83 / SGSC4696).